We begin with the raw amino-acid sequence, 2863 residues long: Lipopolysaccharide-responsive and beige-like anchor protein (2863 aa).

3 disordered regions span residues 1 to 35 (MASE…ALSL), 969 to 1005 (VGSQ…ESAS), and 1018 to 1039 (EMKA…ETLT). Alanine 2 carries the N-acetylalanine modification. Phosphoserine is present on residues serine 10, serine 979, and serine 1003. Residues 985–1005 (FTTNGNENSSIEKTSSLESAS) show a composition bias toward polar residues. Residues 1006–1053 (NIELQTTNTSYEEMKAEQENQELPDEGTLEETLTNETRNADDLEVSSD) are a coiled coil. A compositionally biased stretch (acidic residues) spans 1024 to 1034 (ENQELPDEGTL). 3 positions are modified to phosphoserine: serine 1100, serine 1135, and serine 1139. Residues 1161–1176 (PVTEKQTDTETQDSKD) are compositionally biased toward basic and acidic residues. Residues 1161–1193 (PVTEKQTDTETQDSKDSGIQTMTASGSSAMSPE) form a disordered region. Residues 1177–1193 (SGIQTMTASGSSAMSPE) show a composition bias toward polar residues. Phosphoserine is present on residues serine 1233, serine 1247, and serine 1261. The stretch at 1301 to 1343 (STVFRIPEFNWSQMHQRLLTDLLFSIETDIQMWRSHSTKTVMD) is one WD 1 repeat. 2 positions are modified to phosphoserine: serine 1488 and serine 1498. A helical membrane pass occupies residues 1531–1548 (FLALAVVYFISVLMVSKY). A compositionally biased stretch (low complexity) spans 1586–1599 (LTTASVEESESTSS). 2 disordered regions span residues 1586–1668 (LTTA…KATP) and 1759–1789 (QASD…VSQD). The residue at position 1605 (serine 1605) is a Phosphoserine. Positions 1650-1664 (KSPETKNDRGNDLDT) are enriched in basic and acidic residues. Serine 1767, serine 1770, and serine 2064 each carry phosphoserine. Residues 1769–1789 (GSRSSNAKLPSVPTVDSVSQD) are compositionally biased toward polar residues. A BEACH-type PH domain is found at 2073–2181 (NLAGPVSLST…TVKKVVNYLP (109 aa)). Residues 2200 to 2489 (ASPRQLFKAS…QLLIEPHPPR (290 aa)) form the BEACH domain. Position 2496 is a phosphoserine (serine 2496). 5 WD repeats span residues 2591 to 2633 (DQSI…LIQV), 2636 to 2679 (GHWD…SGIG), 2695 to 2735 (GHDY…RTLE), 2777 to 2816 (ETDD…QLFA), and 2819 to 2858 (GCDA…WHHE).

Interacts with TOM1 and TOLLIP. As to expression, ubiquitous.

It localises to the cell membrane. It is found in the endoplasmic reticulum membrane. The protein resides in the golgi apparatus. The protein localises to the trans-Golgi network membrane. Its subcellular location is the lysosome membrane. In terms of biological role, involved in coupling signal transduction and vesicle trafficking to enable polarized secretion and/or membrane deposition of immune effector molecules. Involved in phagophore growth during mitophagy by regulating ATG9A trafficking to mitochondria. The polypeptide is Lipopolysaccharide-responsive and beige-like anchor protein (Homo sapiens (Human)).